We begin with the raw amino-acid sequence, 551 residues long: Cu(2+) suppressing and bleomycin sensitive protein 1 (551 aa).

2 coiled-coil regions span residues 174 to 213 (REIDNERKKNKIEEDLLLRAKLKHCKDEYDILEGKLEEID) and 249 to 300 (NSLL…DSGK). The tract at residues 513–551 (EEKAQNSTSSDGSDDDDNGESGIDSNSNDSEPESEYQQE) is disordered. Residues 532 to 541 (ESGIDSNSND) are compositionally biased toward low complexity. Over residues 542–551 (SEPESEYQQE) the composition is skewed to acidic residues.

It belongs to the CUB1 family. In terms of assembly, monomer. Phosphorylated by PKA in vitro.

It is found in the cytoplasm. The protein resides in the nucleus. In terms of biological role, involved in bleomycin tolerance with links to DNA repair and/or proteasome function. This chain is Cu(2+) suppressing and bleomycin sensitive protein 1 (CUB1), found in Saccharomyces cerevisiae (strain ATCC 204508 / S288c) (Baker's yeast).